Here is a 265-residue protein sequence, read N- to C-terminus: SPbeta prophage-derived uncharacterized protein YomU (265 aa).

Positions 238 to 265 (KADGTKGVVTSDEGTGSSQSSDLGGTTE) are disordered. Residues 249–265 (DEGTGSSQSSDLGGTTE) are compositionally biased toward polar residues.

The chain is SPbeta prophage-derived uncharacterized protein YomU (yomU) from Bacillus subtilis (strain 168).